The chain runs to 465 residues: Cysteine--tRNA ligase (465 aa).

Cys30 contributes to the Zn(2+) binding site. Positions 32–42 match the 'HIGH' region motif; it reads ITVYDYCHVGH. Positions 214, 239, and 243 each coordinate Zn(2+). Positions 271-275 match the 'KMSKS' region motif; it reads KMSKS. Lys274 contributes to the ATP binding site.

It belongs to the class-I aminoacyl-tRNA synthetase family. In terms of assembly, monomer. Zn(2+) is required as a cofactor.

Its subcellular location is the cytoplasm. The catalysed reaction is tRNA(Cys) + L-cysteine + ATP = L-cysteinyl-tRNA(Cys) + AMP + diphosphate. This is Cysteine--tRNA ligase from Burkholderia ambifaria (strain ATCC BAA-244 / DSM 16087 / CCUG 44356 / LMG 19182 / AMMD) (Burkholderia cepacia (strain AMMD)).